Reading from the N-terminus, the 250-residue chain is tRNA (guanine-N(1)-)-methyltransferase (250 aa).

S-adenosyl-L-methionine contacts are provided by residues G116 and 136 to 141 (IGDYVL).

It belongs to the RNA methyltransferase TrmD family. As to quaternary structure, homodimer.

It is found in the cytoplasm. The catalysed reaction is guanosine(37) in tRNA + S-adenosyl-L-methionine = N(1)-methylguanosine(37) in tRNA + S-adenosyl-L-homocysteine + H(+). Specifically methylates guanosine-37 in various tRNAs. This chain is tRNA (guanine-N(1)-)-methyltransferase, found in Stutzerimonas stutzeri (strain A1501) (Pseudomonas stutzeri).